We begin with the raw amino-acid sequence, 64 residues long: DNA gyrase inhibitor YacG (64 aa).

Zn(2+) contacts are provided by cysteine 9, cysteine 12, cysteine 28, and cysteine 32. The interval 45-64 (KRIPSAGDLSDSDDWSEQQP) is disordered. Over residues 54–64 (SDSDDWSEQQP) the composition is skewed to acidic residues.

Belongs to the DNA gyrase inhibitor YacG family. Interacts with GyrB. Zn(2+) is required as a cofactor.

In terms of biological role, inhibits all the catalytic activities of DNA gyrase by preventing its interaction with DNA. Acts by binding directly to the C-terminal domain of GyrB, which probably disrupts DNA binding by the gyrase. This chain is DNA gyrase inhibitor YacG, found in Klebsiella pneumoniae (strain 342).